A 371-amino-acid polypeptide reads, in one-letter code: Probable RNA 3'-terminal phosphate cyclase-like protein (371 aa).

This sequence belongs to the RNA 3'-terminal cyclase family. Type 2 subfamily. In terms of assembly, part of the small subunit (SSU) processome, composed of more than 70 proteins and the RNA chaperone small nucleolar RNA (snoRNA) U3.

It is found in the nucleus. The protein localises to the nucleolus. Its function is as follows. Part of the small subunit (SSU) processome, first precursor of the small eukaryotic ribosomal subunit. During the assembly of the SSU processome in the nucleolus, many ribosome biogenesis factors, an RNA chaperone and ribosomal proteins associate with the nascent pre-rRNA and work in concert to generate RNA folding, modifications, rearrangements and cleavage as well as targeted degradation of pre-ribosomal RNA by the RNA exosome. Does not have cyclase activity. In Dictyostelium discoideum (Social amoeba), this protein is Probable RNA 3'-terminal phosphate cyclase-like protein (rcl1).